Consider the following 448-residue polypeptide: Keratin, type I cytoskeletal 27 (448 aa).

The tract at residues 1–73 (MSVRFSSASR…ANEHGLLSGN (73 aa)) is head. The segment at 74–109 (EKVTMQNLNDRLASYLENVQALEEANADLEQKIKDW) is coil 1A. Residues 74 to 389 (EKVTMQNLND…RLIDGDEGSC (316 aa)) enclose the IF rod domain. The interval 110-131 (YEKFGPGSCRGLDHDYSRYFPI) is linker 1. The segment at 132–223 (IDDLRTQIIS…KNHEEEMQAL (92 aa)) is coil 1B. The interval 224-246 (QCAAGGNVNVEMNAAPGVDLTVL) is linker 12. Positions 247–385 (LNNMRAEYEA…ETYCRLIDGD (139 aa)) are coil 2. The segment at 386–448 (EGSCVKAKGQ…VNKTEQRIPS (63 aa)) is tail. Positions 427–448 (SRVHTLEEKSTKVNKTEQRIPS) are disordered. Positions 430–448 (HTLEEKSTKVNKTEQRIPS) are enriched in basic and acidic residues.

It belongs to the intermediate filament family. As to quaternary structure, heterotetramer of two type I and two type II keratins. Interacts with KRT6A to form filaments. As to expression, expressed in skin. Expressed in the Henle layer and cuticle of the irs in hair follicle bulb. In the hair follicle, expression was observed in all layers of the irs but was stronger in the Henle layer and cuticle than the Huxley layer until the Henle layer differentiated (at protein level).

Its subcellular location is the cytoplasm. Functionally, essential for the proper assembly of type I and type II keratin protein complexes and formation of keratin intermediate filaments in the inner root sheath (irs). This is Keratin, type I cytoskeletal 27 from Mus musculus (Mouse).